Consider the following 510-residue polypeptide: ATP synthase subunit alpha (510 aa).

ATP is bound at residue 169–176; the sequence is GDRQTGKT.

It belongs to the ATPase alpha/beta chains family. As to quaternary structure, F-type ATPases have 2 components, CF(1) - the catalytic core - and CF(0) - the membrane proton channel. CF(1) has five subunits: alpha(3), beta(3), gamma(1), delta(1), epsilon(1). CF(0) has four main subunits: a(1), b(1), b'(1) and c(9-12).

The protein localises to the cell inner membrane. The catalysed reaction is ATP + H2O + 4 H(+)(in) = ADP + phosphate + 5 H(+)(out). Produces ATP from ADP in the presence of a proton gradient across the membrane. The alpha chain is a regulatory subunit. The sequence is that of ATP synthase subunit alpha from Rhodopseudomonas palustris (strain BisB18).